The sequence spans 717 residues: Ribosomal RNA large subunit methyltransferase K/L (717 aa).

Residues 44-155 (DAYKVCIYSY…KQFVNVFLCL (112 aa)) enclose the THUMP domain.

Belongs to the methyltransferase superfamily. RlmKL family.

The protein resides in the cytoplasm. The catalysed reaction is guanosine(2445) in 23S rRNA + S-adenosyl-L-methionine = N(2)-methylguanosine(2445) in 23S rRNA + S-adenosyl-L-homocysteine + H(+). It catalyses the reaction guanosine(2069) in 23S rRNA + S-adenosyl-L-methionine = N(2)-methylguanosine(2069) in 23S rRNA + S-adenosyl-L-homocysteine + H(+). Functionally, specifically methylates the guanine in position 2445 (m2G2445) and the guanine in position 2069 (m7G2069) of 23S rRNA. This chain is Ribosomal RNA large subunit methyltransferase K/L, found in Francisella tularensis subsp. tularensis (strain SCHU S4 / Schu 4).